The following is a 624-amino-acid chain: Membrane protein insertase YidC (624 aa).

A helical membrane pass occupies residues methionine 8 to alanine 28. The disordered stretch occupies residues glutamine 36–glutamate 95. Polar residues predominate over residues asparagine 43–proline 64. 5 consecutive transmembrane segments (helical) span residues phenylalanine 370–leucine 390, leucine 396–leucine 416, tryptophan 470–isoleucine 490, leucine 526–leucine 542, and phenylalanine 559–isoleucine 579.

This sequence belongs to the OXA1/ALB3/YidC family. Type 1 subfamily. As to quaternary structure, interacts with the Sec translocase complex via SecD. Specifically interacts with transmembrane segments of nascent integral membrane proteins during membrane integration.

The protein localises to the cell inner membrane. Functionally, required for the insertion and/or proper folding and/or complex formation of integral membrane proteins into the membrane. Involved in integration of membrane proteins that insert both dependently and independently of the Sec translocase complex, as well as at least some lipoproteins. Aids folding of multispanning membrane proteins. This Methylobacterium sp. (strain 4-46) protein is Membrane protein insertase YidC.